A 445-amino-acid chain; its full sequence is Argininosuccinate synthase (445 aa).

ATP-binding positions include 17-25 (AFSGGLDTS) and alanine 43. Tyrosine 99 is a binding site for L-citrulline. Residues glycine 129 and threonine 131 each contribute to the ATP site. Residues threonine 131, asparagine 135, and aspartate 136 each coordinate L-aspartate. L-citrulline is bound at residue asparagine 135. Aspartate 136 contributes to the ATP binding site. 2 residues coordinate L-citrulline: arginine 139 and serine 192. Position 194 (aspartate 194) interacts with ATP. L-citrulline-binding residues include threonine 201, glutamate 203, and glutamate 280.

The protein belongs to the argininosuccinate synthase family. Type 2 subfamily. As to quaternary structure, homotetramer.

The protein resides in the cytoplasm. The catalysed reaction is L-citrulline + L-aspartate + ATP = 2-(N(omega)-L-arginino)succinate + AMP + diphosphate + H(+). It functions in the pathway amino-acid biosynthesis; L-arginine biosynthesis; L-arginine from L-ornithine and carbamoyl phosphate: step 2/3. This is Argininosuccinate synthase from Burkholderia cenocepacia (strain HI2424).